The sequence spans 247 residues: uncharacterized protein (247 aa).

This is an uncharacterized protein from Acidianus bottle-shaped virus (isolate Italy/Pozzuoli) (ABV).